Here is a 553-residue protein sequence, read N- to C-terminus: Undecaprenyl phosphate-alpha-4-amino-4-deoxy-L-arabinose arabinosyl transferase (553 aa).

A run of 11 helical transmembrane segments spans residues 6-26 (ACKVGAFLMALFFVITYLLPL), 89-109 (FGSVFCIFISAILLYRLAMMM), 115-135 (IAFATSLIYISMFLVFAIGTY), 180-200 (FMTKGFLALAVPVIVMLPIVI), 208-228 (IVCFGPLAIISAIAISLPWVI), 258-278 (IAPFWYYIPILILGVIPWLGL), 293-313 (NPEMFFLLCWFVVPLLFFSIA), 317-337 (LPTYILPCMAPLAMMMAKFGV), 352-372 (GMVNVFLGLLAVIVLFAMEVV), 386-406 (WVLAIVAFGIWGIIGYLCFAL), and 410-430 (YWLLAAFCSIVVSLVIGHALP).

This sequence belongs to the glycosyltransferase 83 family.

It is found in the cell inner membrane. The enzyme catalyses 4-amino-4-deoxy-alpha-L-arabinopyranosyl di-trans,octa-cis-undecaprenyl phosphate + lipid IVA = lipid IIA + di-trans,octa-cis-undecaprenyl phosphate.. The protein operates within lipopolysaccharide metabolism; 4-amino-4-deoxy-beta-L-arabinose-lipid A biosynthesis. In terms of biological role, catalyzes the transfer of the L-Ara4N moiety of the glycolipid undecaprenyl phosphate-alpha-L-Ara4N to lipid A. The modified arabinose is attached to lipid A and is required for resistance to polymyxin and cationic antimicrobial peptides. This Photorhabdus laumondii subsp. laumondii (strain DSM 15139 / CIP 105565 / TT01) (Photorhabdus luminescens subsp. laumondii) protein is Undecaprenyl phosphate-alpha-4-amino-4-deoxy-L-arabinose arabinosyl transferase (arnT).